The sequence spans 394 residues: Putative pectate lyase 17 (394 aa).

Positions 1–22 are cleaved as a signal peptide; that stretch reads MTHFTVSCLLVALFLCQSLVHA. The Ca(2+) site is built by Asp-192, Asp-216, and Asp-220. Arg-272 is a catalytic residue.

This sequence belongs to the polysaccharide lyase 1 family. The cofactor is Ca(2+).

It catalyses the reaction Eliminative cleavage of (1-&gt;4)-alpha-D-galacturonan to give oligosaccharides with 4-deoxy-alpha-D-galact-4-enuronosyl groups at their non-reducing ends.. It participates in glycan metabolism; pectin degradation; 2-dehydro-3-deoxy-D-gluconate from pectin: step 2/5. In Arabidopsis thaliana (Mouse-ear cress), this protein is Putative pectate lyase 17.